Here is a 118-residue protein sequence, read N- to C-terminus: GRB2-related adapter protein-like (118 aa).

Positions 1 to 58 (MESVALYSFQATESDELAFNKGDTLKILNMEDDQNWYKAELRGVEGFIPKNYIRVKPH) constitute an SH3 domain. In terms of domain architecture, SH2 spans 60-118 (WYSGRISRQLAEEILMKRNHLGAFLIRESESSPGEFSVSVNNRAQRGPCLGPKSHSRLG). Positions 89–118 (ESSPGEFSVSVNNRAQRGPCLGPKSHSRLG) are disordered. The span at 90-103 (SSPGEFSVSVNNRA) shows a compositional bias: polar residues.

This sequence belongs to the GRB2/sem-5/DRK family.

This Homo sapiens (Human) protein is GRB2-related adapter protein-like (GRAPL).